The sequence spans 335 residues: Dihydroorotate dehydrogenase (quinone) (335 aa).

Residues 59-63 and threonine 83 each bind FMN; that span reads AGLDK. Lysine 63 is a substrate binding site. Position 108–112 (108–112) interacts with substrate; it reads NRMGF. Positions 136 and 169 each coordinate FMN. Substrate is bound at residue asparagine 169. Serine 172 functions as the Nucleophile in the catalytic mechanism. Asparagine 174 contributes to the substrate binding site. FMN contacts are provided by lysine 214 and threonine 242. Residue 243 to 244 participates in substrate binding; the sequence is NT. Residues glycine 265, glycine 294, and 315–316 contribute to the FMN site; that span reads YS.

Belongs to the dihydroorotate dehydrogenase family. Type 2 subfamily. Monomer. The cofactor is FMN.

The protein resides in the cell membrane. The enzyme catalyses (S)-dihydroorotate + a quinone = orotate + a quinol. The protein operates within pyrimidine metabolism; UMP biosynthesis via de novo pathway; orotate from (S)-dihydroorotate (quinone route): step 1/1. Its function is as follows. Catalyzes the conversion of dihydroorotate to orotate with quinone as electron acceptor. The protein is Dihydroorotate dehydrogenase (quinone) of Neisseria gonorrhoeae (strain ATCC 700825 / FA 1090).